Reading from the N-terminus, the 358-residue chain is 3-isopropylmalate dehydrogenase (358 aa).

Arg-92, Arg-102, Arg-130, and Asp-224 together coordinate substrate. Mg(2+) is bound by residues Asp-224, Asp-248, and Asp-252. An NAD(+)-binding site is contributed by 282-294; it reads GSAPDIAGQGIAN.

This sequence belongs to the isocitrate and isopropylmalate dehydrogenases family. LeuB type 1 subfamily. In terms of assembly, homodimer. The cofactor is Mg(2+). Requires Mn(2+) as cofactor.

The protein resides in the cytoplasm. The catalysed reaction is (2R,3S)-3-isopropylmalate + NAD(+) = 4-methyl-2-oxopentanoate + CO2 + NADH. It participates in amino-acid biosynthesis; L-leucine biosynthesis; L-leucine from 3-methyl-2-oxobutanoate: step 3/4. Catalyzes the oxidation of 3-carboxy-2-hydroxy-4-methylpentanoate (3-isopropylmalate) to 3-carboxy-4-methyl-2-oxopentanoate. The product decarboxylates to 4-methyl-2 oxopentanoate. The chain is 3-isopropylmalate dehydrogenase from Bordetella avium (strain 197N).